Consider the following 353-residue polypeptide: Methylthioribose-1-phosphate isomerase (353 aa).

The Proton donor role is filled by Asp241.

It belongs to the eIF-2B alpha/beta/delta subunits family. MtnA subfamily.

It is found in the cytoplasm. The protein resides in the nucleus. It catalyses the reaction 5-(methylsulfanyl)-alpha-D-ribose 1-phosphate = 5-(methylsulfanyl)-D-ribulose 1-phosphate. Its pathway is amino-acid biosynthesis; L-methionine biosynthesis via salvage pathway; L-methionine from S-methyl-5-thio-alpha-D-ribose 1-phosphate: step 1/6. Its function is as follows. Catalyzes the interconversion of methylthioribose-1-phosphate (MTR-1-P) into methylthioribulose-1-phosphate (MTRu-1-P). In Danio rerio (Zebrafish), this protein is Methylthioribose-1-phosphate isomerase (mri1).